The following is a 276-amino-acid chain: Pyrroline-5-carboxylate reductase (276 aa).

The protein belongs to the pyrroline-5-carboxylate reductase family.

It localises to the cytoplasm. It catalyses the reaction L-proline + NADP(+) = (S)-1-pyrroline-5-carboxylate + NADPH + 2 H(+). The enzyme catalyses L-proline + NAD(+) = (S)-1-pyrroline-5-carboxylate + NADH + 2 H(+). The protein operates within amino-acid biosynthesis; L-proline biosynthesis; L-proline from L-glutamate 5-semialdehyde: step 1/1. The sequence is that of Pyrroline-5-carboxylate reductase (PROC1) from Arabidopsis thaliana (Mouse-ear cress).